The primary structure comprises 61 residues: Probable tautomerase LMOf2365_2536 (61 aa).

Catalysis depends on Pro2, which acts as the Proton acceptor; via imino nitrogen.

This sequence belongs to the 4-oxalocrotonate tautomerase family.

In Listeria monocytogenes serotype 4b (strain F2365), this protein is Probable tautomerase LMOf2365_2536.